The sequence spans 154 residues: Large ribosomal subunit protein uL15 (154 aa).

The segment at 1–54 (MKLHDLTPAPGSRKPKKRVGRGPGGTDKTAGRGHKGQKSRSGAGKGPFFEGGRS) is disordered.

It belongs to the universal ribosomal protein uL15 family. As to quaternary structure, part of the 50S ribosomal subunit.

Its function is as follows. Binds to the 23S rRNA. The protein is Large ribosomal subunit protein uL15 of Deinococcus geothermalis (strain DSM 11300 / CIP 105573 / AG-3a).